Consider the following 151-residue polypeptide: FAD synthase (151 aa).

ATP contacts are provided by residues Thr-12–Phe-13, His-17–His-20, Asp-97, and Tyr-125.

It belongs to the archaeal FAD synthase family. As to quaternary structure, homodimer. The cofactor is a divalent metal cation.

It catalyses the reaction FMN + ATP + H(+) = FAD + diphosphate. It participates in cofactor biosynthesis; FAD biosynthesis; FAD from FMN: step 1/1. Its function is as follows. Catalyzes the transfer of the AMP portion of ATP to flavin mononucleotide (FMN) to produce flavin adenine dinucleotide (FAD) coenzyme. This is FAD synthase from Methanococcus vannielii (strain ATCC 35089 / DSM 1224 / JCM 13029 / OCM 148 / SB).